The sequence spans 322 residues: Protein-methionine-sulfoxide reductase catalytic subunit MsrP (322 aa).

The tat-type signal signal peptide spans 1–59; sequence MSLRDALKTPSSEITDEAVYRDRRRLLQLFALTPALSVAGCAEADPPPPPKTVVTPAQA. Residues asparagine 79, 82 to 83, cysteine 137, threonine 172, asparagine 220, arginine 225, and 236 to 238 contribute to the Mo-molybdopterin site; these read YE and SIK.

The protein belongs to the MsrP family. Heterodimer of a catalytic subunit (MsrP) and a heme-binding subunit (MsrQ). Requires Mo-molybdopterin as cofactor. Predicted to be exported by the Tat system. The position of the signal peptide cleavage has not been experimentally proven.

It localises to the periplasm. It catalyses the reaction L-methionyl-[protein] + a quinone + H2O = L-methionyl-(S)-S-oxide-[protein] + a quinol. It carries out the reaction L-methionyl-[protein] + a quinone + H2O = L-methionyl-(R)-S-oxide-[protein] + a quinol. Part of the MsrPQ system that repairs oxidized periplasmic proteins containing methionine sulfoxide residues (Met-O), using respiratory chain electrons. Thus protects these proteins from oxidative-stress damage caused by reactive species of oxygen and chlorine generated by the host defense mechanisms. MsrPQ is essential for the maintenance of envelope integrity under bleach stress, rescuing a wide series of structurally unrelated periplasmic proteins from methionine oxidation. The catalytic subunit MsrP is non-stereospecific, being able to reduce both (R-) and (S-) diastereoisomers of methionine sulfoxide. This is Protein-methionine-sulfoxide reductase catalytic subunit MsrP from Xanthomonas campestris pv. campestris (strain ATCC 33913 / DSM 3586 / NCPPB 528 / LMG 568 / P 25).